We begin with the raw amino-acid sequence, 185 residues long: Ribosome-recycling factor (185 aa).

The span at 131–155 (DRKNANDKIKKSEKDKEITADESKS) shows a compositional bias: basic and acidic residues. The disordered stretch occupies residues 131 to 156 (DRKNANDKIKKSEKDKEITADESKSA).

This sequence belongs to the RRF family.

It is found in the cytoplasm. Its function is as follows. Responsible for the release of ribosomes from messenger RNA at the termination of protein biosynthesis. May increase the efficiency of translation by recycling ribosomes from one round of translation to another. The sequence is that of Ribosome-recycling factor from Sulfurimonas denitrificans (strain ATCC 33889 / DSM 1251) (Thiomicrospira denitrificans (strain ATCC 33889 / DSM 1251)).